A 424-amino-acid chain; its full sequence is Neurotensin receptor type 1 (424 aa).

Positions 1 to 23 are disordered; that stretch reads MHLNSSVPQGTPGEPDAQPFSGP. The Extracellular segment spans residues 1-68; it reads MHLNSSVPQG…TDIYSKVLVT (68 aa). N-linked (GlcNAc...) asparagine glycosylation is found at Asn-4, Asn-38, and Asn-42. The chain crosses the membrane as a helical span at residues 69 to 89; sequence AIYLALFVVGTVGNSVTAFTL. Over 90–103 the chain is Cytoplasmic; the sequence is ARKKSLQSLQSTVH. The chain crosses the membrane as a helical span at residues 104-123; that stretch reads YHLGSLALSDLLILLLAMPV. Topologically, residues 124 to 143 are extracellular; the sequence is ELYNFIWVHHPWAFGDAGCR. Cys-142 and Cys-225 are oxidised to a cystine. Residues 144-165 form a helical membrane-spanning segment; sequence GYYFLRDACTYATALNVASLSV. Residues 166 to 185 are Cytoplasmic-facing; sequence ERYLAICHPFKAKTLMSRSR. The chain crosses the membrane as a helical span at residues 186–206; the sequence is TKKFISAIWLASALLAIPMLF. The Extracellular portion of the chain corresponds to 207-235; that stretch reads TMGLQNRSGDGTHPGGLVCTPIVDTATVK. The helical transmembrane segment at 236-260 threads the bilayer; the sequence is VVIQVNTFMSFLFPMLVISILNTVI. At 261 to 308 the chain is on the cytoplasmic side; the sequence is ANKLTVMVHQAAEQGRVCTVGTHNGLEHSTFNMTIEPGRVQALRHGVL. Residues 309-330 form a helical membrane-spanning segment; sequence VLRAVVIAFVVCWLPYHVRRLM. The interval 326–349 is neurotensin binding; the sequence is VRRLMFCYISDEQWTTFLFDFYHY. Residues 331-348 are Extracellular-facing; it reads FCYISDEQWTTFLFDFYH. A helical transmembrane segment spans residues 349 to 369; that stretch reads YFYMLTNALFYVSSAINPILY. Over 370-424 the chain is Cytoplasmic; sequence NLVSANFRQVFLSTLACLCPGWRHRRKKRPTFSRKPNSMSSNHAFSTSATRETLY. S-palmitoyl cysteine attachment occurs at residues Cys-386 and Cys-388. The segment at 397-424 is disordered; it reads KRPTFSRKPNSMSSNHAFSTSATRETLY. Residues 403 to 424 show a composition bias toward polar residues; that stretch reads RKPNSMSSNHAFSTSATRETLY.

The protein belongs to the G-protein coupled receptor 1 family. Neurotensin receptor subfamily. NTSR1 sub-subfamily. As to quaternary structure, interacts (palmitoylated form) with GNA11. Post-translationally, N-glycosylated. In terms of processing, palmitoylated; this is required for normal localization at membrane rafts and normal GNA11-mediated activation of down-stream signaling cascades. The palmitoylation level increases in response to neurotensin treatment. As to expression, detected in brain and small intestine.

The protein localises to the cell membrane. Its subcellular location is the membrane raft. Functionally, G-protein coupled receptor for the tridecapeptide neurotensin (NTS). Signaling is effected via G proteins that activate a phosphatidylinositol-calcium second messenger system. Signaling leads to the activation of downstream MAP kinases and protects cells against apoptosis. This Rattus norvegicus (Rat) protein is Neurotensin receptor type 1 (Ntsr1).